We begin with the raw amino-acid sequence, 248 residues long: Polyhedrin (248 aa).

An N-terminal signal peptide occupies residues 1 to 27 (MADVAGTSNRDFRGREQRLFNSEQYNY). N-linked (GlcNAc...) asparagine; by host glycans are attached at residues asparagine 28, asparagine 77, asparagine 86, and asparagine 237.

Its subcellular location is the host cytoplasm. Functionally, major component of the virus occlusion bodies, which are large proteinaceous structures (polyhedra), that protect the virus from the outside environment for extended periods until they are ingested by insect larvae. The polypeptide is Polyhedrin (Bombyx mori cytoplasmic polyhedrosis virus (BmCPV)).